The sequence spans 271 residues: Signal recognition particle receptor subunit beta (271 aa).

Residues 37-57 (LLSVVVAVLAVLLTLVFWKLI) form a helical membrane-spanning segment. Residues 71 to 79 (GLCDSGKTL) and 92 to 95 (TQTS) contribute to the GTP site. Residue Ser112 is modified to Phosphoserine. GTP is bound at residue Gly120. Thr214 is subject to Phosphothreonine. Ala248 is a GTP binding site.

This sequence belongs to the SRP receptor beta subunit family. As to quaternary structure, heterodimer with SRPRA.

The protein resides in the endoplasmic reticulum membrane. Component of the signal recognition particle (SRP) complex receptor (SR). Ensures, in conjunction with the SRP complex, the correct targeting of the nascent secretory proteins to the endoplasmic reticulum membrane system. May mediate the membrane association of SR. This Homo sapiens (Human) protein is Signal recognition particle receptor subunit beta (SRPRB).